The sequence spans 687 residues: Guanine-nucleotide exchange factor YEL1 (687 aa).

Residues tyrosine 14–glutamate 27 are compositionally biased toward polar residues. Disordered stretches follow at residues tyrosine 14 to serine 35 and alanine 63 to asparagine 97. Residues isoleucine 57–threonine 264 form the SEC7 domain. Residues threonine 73–threonine 83 are compositionally biased toward low complexity. The residue at position 290 (threonine 290) is a Phosphothreonine. Serine 293 and serine 299 each carry phosphoserine. Residues threonine 412–isoleucine 551 enclose the PH domain.

This sequence belongs to the YEL1 family.

It localises to the cytoplasm. The protein resides in the cell membrane. The protein localises to the bud neck. It is found in the bud tip. Functionally, guanine nucleotide exchange factor for ARF3 required for localization of ARF3 to the bud neck and tip and involved in actin patch polarization. This chain is Guanine-nucleotide exchange factor YEL1 (YEL1), found in Saccharomyces cerevisiae (strain YJM789) (Baker's yeast).